The following is a 62-amino-acid chain: U8-theraphotoxin-Cg1a 1 (62 aa).

An N-terminal signal peptide occupies residues Met1–Ala21. A propeptide spanning residues Asn22–Arg29 is cleaved from the precursor. Cystine bridges form between Cys31–Cys46, Cys38–Cys51, and Cys45–Cys58.

Belongs to the neurotoxin 10 (Hwtx-1) family. 30 (Jztx-14) subfamily. As to expression, expressed by the venom gland.

It localises to the secreted. Probable ion channel inhibitor. The polypeptide is U8-theraphotoxin-Cg1a 1 (Chilobrachys guangxiensis (Chinese earth tiger tarantula)).